A 932-amino-acid chain; its full sequence is MRIREQTILALLSPGLPPVTGQHVLDLSEPGWTVSSKALNRTVPGRLPSQVHLDLFEAGVIATMGSMILTFAGLRMPTGRTPATLLLGCELTDHESTWLVFDGLDTFTTITFCDQIIGSTYNQFRQYHFDVSQVLKECKQEGPVLSINFGSAPNIANAIANGPSAEEWPAGVQITNEYPNRWYIRKEQSDFGWDWGPAFAPAGPWKPAYIVQNKNPDRLYVLNTDLDIYRRGQINHLPPDQSQSWVVNASIDVLGSVPQWPSMSVEIKDAYSGVVLSSGLLENVTVSGNSVTGVTVVDGRTPKLWWPNGMGDQSLYNVTIAVHNHRNQVVAEVMKRTGFRTIFLNQRNITEEQLAQGVAPGANWHFEINGREFYAKGSNIIPPDAFWPRVTPSRMERLFDAVTAGNQNMLRVWASGAYLHDFIYDLADEKGILLWSEFQFSDALYPVDDAFLENVAAEVVYNVRRVNHHPSLALWAGGNEIESLMLPMVRRADHKGYAKYVGEYEKLYISLILPLVYENTRSITYSPSSTTEGYLHVNLSAPVPMTERYSNTTPGSYYGDTDYYNYDTSVSFNYHKYPVGRFANEFGFHSMPSLQTWQQAVDPKDLYFNSSVVVLRNHHYTAGGLFTDNYQNSSRGMGEMTMGVESYYPIPSKSDPVANFSAWCHATQLFQADMYKAQIQFYRRGSGMPERQLGSLYWQLEDTWQAPTWAGIEYDGRWKMLHYVARDIYEPIIVSPFWNYTTGDLEVYVTSDLWEPAQGTVNLTWVDLSGKSIAGNAGTPESIPFSVGALNATDVYSANVADLSPPDLTDSILILSLAGEGYLPNARTRSEFRHENQFTPVFPKDLALRDPKLELAYNPDTRTFTVEATAGVSLYTWLDYPAGVVGYFEQNGFVLLPGMKKEIGFVVQEGSVDEDWMRSVTVTSLWDQKVRE.

The signal sequence occupies residues 1-21; sequence MRIREQTILALLSPGLPPVTG. 5 N-linked (GlcNAc...) asparagine glycosylation sites follow: N40, N248, N283, N317, and N348. Residue E480 is the Proton donor of the active site. N-linked (GlcNAc...) asparagine glycosylation is found at N538, N609, N632, N659, N739, N762, and N791.

Belongs to the glycosyl hydrolase 2 family. Beta-mannosidase A subfamily. Homodimer.

It localises to the secreted. The catalysed reaction is Hydrolysis of terminal, non-reducing beta-D-mannose residues in beta-D-mannosides.. It participates in glycan metabolism; N-glycan degradation. In terms of biological role, exoglycosidase that cleaves the single beta-linked mannose residue from the non-reducing end of beta-mannosidic oligosaccharides of various complexity and length. Involved in the degradation of polymeric mannan and galactomannan. The protein is Beta-mannosidase A (mndA) of Aspergillus clavatus (strain ATCC 1007 / CBS 513.65 / DSM 816 / NCTC 3887 / NRRL 1 / QM 1276 / 107).